An 80-amino-acid chain; its full sequence is Cytochrome c oxidase subunit 7B, mitochondrial (80 aa).

Residues Met-1–Gln-24 constitute a mitochondrion transit peptide. Residues Ser-25–Asp-32 are Mitochondrial matrix-facing. A helical membrane pass occupies residues Phe-33 to Gln-59. The Mitochondrial intermembrane segment spans residues Val-60–Gln-80.

The protein belongs to the cytochrome c oxidase VIIb family. In terms of assembly, component of the cytochrome c oxidase (complex IV, CIV), a multisubunit enzyme composed of 14 subunits. The complex is composed of a catalytic core of 3 subunits MT-CO1, MT-CO2 and MT-CO3, encoded in the mitochondrial DNA, and 11 supernumerary subunits COX4I, COX5A, COX5B, COX6A, COX6B, COX6C, COX7A, COX7B, COX7C, COX8 and NDUFA4, which are encoded in the nuclear genome. The complex exists as a monomer or a dimer and forms supercomplexes (SCs) in the inner mitochondrial membrane with NADH-ubiquinone oxidoreductase (complex I, CI) and ubiquinol-cytochrome c oxidoreductase (cytochrome b-c1 complex, complex III, CIII), resulting in different assemblies (supercomplex SCI(1)III(2)IV(1) and megacomplex MCI(2)III(2)IV(2)).

The protein localises to the mitochondrion inner membrane. It functions in the pathway energy metabolism; oxidative phosphorylation. Its function is as follows. Component of the cytochrome c oxidase, the last enzyme in the mitochondrial electron transport chain which drives oxidative phosphorylation. The respiratory chain contains 3 multisubunit complexes succinate dehydrogenase (complex II, CII), ubiquinol-cytochrome c oxidoreductase (cytochrome b-c1 complex, complex III, CIII) and cytochrome c oxidase (complex IV, CIV), that cooperate to transfer electrons derived from NADH and succinate to molecular oxygen, creating an electrochemical gradient over the inner membrane that drives transmembrane transport and the ATP synthase. Cytochrome c oxidase is the component of the respiratory chain that catalyzes the reduction of oxygen to water. Electrons originating from reduced cytochrome c in the intermembrane space (IMS) are transferred via the dinuclear copper A center (CU(A)) of subunit 2 and heme A of subunit 1 to the active site in subunit 1, a binuclear center (BNC) formed by heme A3 and copper B (CU(B)). The BNC reduces molecular oxygen to 2 water molecules using 4 electrons from cytochrome c in the IMS and 4 protons from the mitochondrial matrix. Plays a role in proper central nervous system (CNS) development in vertebrates. This chain is Cytochrome c oxidase subunit 7B, mitochondrial (COX7B), found in Pongo abelii (Sumatran orangutan).